We begin with the raw amino-acid sequence, 242 residues long: 6-carboxyhexanoate--CoA ligase (242 aa).

The protein belongs to the BioW family. In terms of assembly, homodimer. Requires Mg(2+) as cofactor.

The enzyme catalyses heptanedioate + ATP + CoA = 6-carboxyhexanoyl-CoA + AMP + diphosphate. It functions in the pathway metabolic intermediate metabolism; pimeloyl-CoA biosynthesis; pimeloyl-CoA from pimelate: step 1/1. In terms of biological role, catalyzes the transformation of pimelate into pimeloyl-CoA with concomitant hydrolysis of ATP to AMP. The protein is 6-carboxyhexanoate--CoA ligase of Veillonella parvula (strain ATCC 10790 / DSM 2008 / CCUG 5123 / JCM 12972 / NCTC 11810 / Te3) (Veillonella alcalescens).